Here is a 376-residue protein sequence, read N- to C-terminus: Chaperone protein DnaJ 2 (376 aa).

The J domain maps to 5 to 70; it reads DYYEVLGVNR…QKRAAYDRYG (66 aa). A CR-type zinc finger spans residues 135–213; that stretch reads GADKTIRIPT…CGGAGRVKRQ (79 aa). Zn(2+) is bound by residues cysteine 148, cysteine 151, cysteine 165, cysteine 168, cysteine 187, cysteine 190, cysteine 201, and cysteine 204. CXXCXGXG motif repeat units follow at residues 148-155, 165-172, 187-194, and 201-208; these read CETCHGSG, CPTCGGAG, CPKCHGTG, and CRDCGGAG.

The protein belongs to the DnaJ family. As to quaternary structure, homodimer. Requires Zn(2+) as cofactor.

Its subcellular location is the cytoplasm. Its function is as follows. Participates actively in the response to hyperosmotic and heat shock by preventing the aggregation of stress-denatured proteins and by disaggregating proteins, also in an autonomous, DnaK-independent fashion. Unfolded proteins bind initially to DnaJ; upon interaction with the DnaJ-bound protein, DnaK hydrolyzes its bound ATP, resulting in the formation of a stable complex. GrpE releases ADP from DnaK; ATP binding to DnaK triggers the release of the substrate protein, thus completing the reaction cycle. Several rounds of ATP-dependent interactions between DnaJ, DnaK and GrpE are required for fully efficient folding. Also involved, together with DnaK and GrpE, in the DNA replication of plasmids through activation of initiation proteins. The sequence is that of Chaperone protein DnaJ 2 from Aromatoleum aromaticum (strain DSM 19018 / LMG 30748 / EbN1) (Azoarcus sp. (strain EbN1)).